The sequence spans 339 residues: Protein FAM50A (339 aa).

A disordered region spans residues 1–31; the sequence is MAQYKGAASEAGRAMHLMKKREKQREQMEQM. An N-acetylalanine modification is found at Ala-2. Lys-100 participates in a covalent cross-link: Glycyl lysine isopeptide (Lys-Gly) (interchain with G-Cter in SUMO2). Residues 150–177 are disordered; it reads TTKKKKLGKNPDVDTSFLPDRDREEEEN. A Nuclear localization signal motif is present at residues 152–155; it reads KKKK. Positions 168-177 are enriched in basic and acidic residues; the sequence is PDRDREEEEN.

It belongs to the FAM50 family. Interacts with EFTUD2, a component of the spliceosome U5 complex. Interacts with DDX41, a component of the spliceosome C complex. As to expression, widely expressed in embryonic and adult tissues.

The protein localises to the nucleus. Its function is as follows. Probably involved in the regulation of pre-mRNA splicing. The chain is Protein FAM50A (Fam50a) from Mus musculus (Mouse).